Consider the following 187-residue polypeptide: Ribosome-recycling factor (187 aa).

The protein belongs to the RRF family.

It localises to the cytoplasm. Its function is as follows. Responsible for the release of ribosomes from messenger RNA at the termination of protein biosynthesis. May increase the efficiency of translation by recycling ribosomes from one round of translation to another. The polypeptide is Ribosome-recycling factor (Paracoccus denitrificans (strain Pd 1222)).